Here is a 325-residue protein sequence, read N- to C-terminus: Putative ankyrin repeat protein RF_0011 (325 aa).

ANK repeat units follow at residues 63-94 (NGNT…AINM), 99-130 (RGQP…NINA), and 134-164 (CGRT…EMII).

The protein is Putative ankyrin repeat protein RF_0011 of Rickettsia felis (strain ATCC VR-1525 / URRWXCal2) (Rickettsia azadi).